The following is a 702-amino-acid chain: Elongation factor G (702 aa).

Residues 8-290 (CQYRNIGISA…AIIEYLPAPN (283 aa)) enclose the tr-type G domain. Residues 17–24 (AHIDAGKT), 88–92 (DTPGH), and 142–145 (NKMD) contribute to the GTP site.

Belongs to the TRAFAC class translation factor GTPase superfamily. Classic translation factor GTPase family. EF-G/EF-2 subfamily.

The protein localises to the cytoplasm. Its function is as follows. Catalyzes the GTP-dependent ribosomal translocation step during translation elongation. During this step, the ribosome changes from the pre-translocational (PRE) to the post-translocational (POST) state as the newly formed A-site-bound peptidyl-tRNA and P-site-bound deacylated tRNA move to the P and E sites, respectively. Catalyzes the coordinated movement of the two tRNA molecules, the mRNA and conformational changes in the ribosome. The chain is Elongation factor G from Buchnera aphidicola subsp. Schizaphis graminum (strain Sg).